The primary structure comprises 323 residues: Leukocyte surface antigen CD47 (323 aa).

An N-terminal signal peptide occupies residues 1-18; that stretch reads MWPLVAALLLGSACCGSA. A Pyrrolidone carboxylic acid modification is found at Gln-19. Residues 19–127 form the Ig-like V-type domain; that stretch reads QLLFNKTKSV…ELTREGETII (109 aa). At 19–141 the chain is on the extracellular side; the sequence is QLLFNKTKSV…RVVSWFSPNE (123 aa). N-linked (GlcNAc...) asparagine glycosylation is found at Asn-23, Asn-34, Asn-50, and Asn-73. Disulfide bonds link Cys-33/Cys-263 and Cys-41/Cys-114. Position 89 is a phosphoserine (Ser-89). Asn-111 carries N-linked (GlcNAc...) asparagine glycosylation. The chain crosses the membrane as a helical span at residues 142–162; that stretch reads NILIVIFPIFAILLFWGQFGI. Over 163–176 the chain is Cytoplasmic; it reads KTLKYRSGGMDEKT. A helical membrane pass occupies residues 177–197; that stretch reads IALLVAGLVITVIVIVGAILF. Residues 198–207 are Extracellular-facing; the sequence is VPGEYSLKNA. The N-linked (GlcNAc...) asparagine glycan is linked to Asn-206. A helical transmembrane segment spans residues 208-228; it reads TGLGLIVTSTGILILLHYYVF. Residues 229–235 lie on the Cytoplasmic side of the membrane; that stretch reads STAIGLT. The chain crosses the membrane as a helical span at residues 236 to 256; that stretch reads SFVIAILVIQVIAYILAVVGL. The Extracellular portion of the chain corresponds to 257-268; sequence SLCIAACIPMHG. Residues 269-289 form a helical membrane-spanning segment; it reads PLLISGLSILALAQLLGLVYM. Residues 290 to 323 are Cytoplasmic-facing; it reads KFVASNQKTIQPPRKAVEEPLNAFKESKGMMNDE.

Monomer. Interacts with THBS1 (via the C-terminal domain). Interacts with SIRPA. Interacts with FAS/CD95; interaction may be enhanced by functional activation. Interacts with SIRPG, UBQLN1 and UBQLN2. May interact with fibrinogen. Interacts with Aedes aegypti neutrophil-stimulating factor 1; the interaction results in inhibition of phagocytosis activity of macrophages. As to expression, very broadly distributed on normal adult tissues, as well as ovarian tumors, being especially abundant in some epithelia and the brain. Macrophages.

Its subcellular location is the cell membrane. In terms of biological role, adhesive protein that mediates cell-to-cell interactions. Acts as a receptor for thrombospondin THBS1 and as modulator of integrin signaling through the activation of heterotrimeric G proteins. Involved in signal transduction, cardiovascular homeostasis, inflammation, apoptosis, angiogenesis, cellular self-renewal, and immunoregulation. Plays a role in modulating pulmonary endothelin EDN1 signaling. Modulates nitrous oxide (NO) signaling, in response to THBS1, hence playing a role as a pressor agent, supporting blood pressure. Plays an important role in memory formation and synaptic plasticity in the hippocampus. Receptor for SIRPA, binding to which prevents maturation of immature dendritic cells and inhibits cytokine production by mature dendritic cells. Interaction with SIRPG mediates cell-cell adhesion, enhances superantigen-dependent T-cell-mediated proliferation and costimulates T-cell activation. Positively modulates FAS-dependent apoptosis in T-cells, perhaps by enhancing FAS clustering. Plays a role in suppressing angiogenesis and may be involved in metabolic dysregulation during normal aging. In response to THBS1, negatively modulates wound healing. Inhibits stem cell self-renewal, in response to THBS1, probably by regulation of the stem cell transcription factors POU5F1/OCT4, SOX2, MYC/c-Myc and KLF4. May play a role in membrane transport and/or integrin dependent signal transduction. May prevent premature elimination of red blood cells. In Homo sapiens (Human), this protein is Leukocyte surface antigen CD47 (CD47).